Consider the following 90-residue polypeptide: MSVKIRMRRMGAKRKPFYRIVVADSRAPRDGRFIEEVGYYNPVSQPKELKLDEDKIFEWLKKGAQPSDTVRSFLSSAGLMAKLHDEKYNK.

Belongs to the bacterial ribosomal protein bS16 family.

This is Small ribosomal subunit protein bS16 from Lactobacillus delbrueckii subsp. bulgaricus (strain ATCC 11842 / DSM 20081 / BCRC 10696 / JCM 1002 / NBRC 13953 / NCIMB 11778 / NCTC 12712 / WDCM 00102 / Lb 14).